The following is a 344-amino-acid chain: S-methyl-5'-thioadenosine phosphorylase (344 aa).

Phosphate-binding positions include threonine 51, 99–100, and 132–133; these read RH and SA. A substrate-binding site is contributed by methionine 234. Residue serine 235 participates in phosphate binding. 258–260 contributes to the substrate binding site; that stretch reads DYD.

Belongs to the PNP/MTAP phosphorylase family. MTAP subfamily. As to quaternary structure, homotrimer.

It is found in the cytoplasm. The protein localises to the nucleus. The enzyme catalyses S-methyl-5'-thioadenosine + phosphate = 5-(methylsulfanyl)-alpha-D-ribose 1-phosphate + adenine. It functions in the pathway amino-acid biosynthesis; L-methionine biosynthesis via salvage pathway; S-methyl-5-thio-alpha-D-ribose 1-phosphate from S-methyl-5'-thioadenosine (phosphorylase route): step 1/1. In terms of biological role, catalyzes the reversible phosphorylation of S-methyl-5'-thioadenosine (MTA) to adenine and 5-methylthioribose-1-phosphate. Involved in the breakdown of MTA, a major by-product of polyamine biosynthesis. Responsible for the first step in the methionine salvage pathway after MTA has been generated from S-adenosylmethionine. Has broad substrate specificity with 6-aminopurine nucleosides as preferred substrates. In Phaeosphaeria nodorum (strain SN15 / ATCC MYA-4574 / FGSC 10173) (Glume blotch fungus), this protein is S-methyl-5'-thioadenosine phosphorylase.